We begin with the raw amino-acid sequence, 1024 residues long: Multidrug resistance protein MdtC (1024 aa).

Helical transmembrane passes span 12–32, 333–353, 360–380, 387–407, 435–455, 469–489, 528–548, 853–873, 875–895, 897–917, 953–973, and 984–1004; these read VATT…FSLL, EVER…FIFL, LIPA…MYLC, LSLM…IVVL, VLSM…MAGL, VAIG…CAWL, WVMV…ISIP, LWLI…LYES, VHPL…LLAL, LFDA…IGIV, PIIM…LSSG, and ITIV…TPVI.

It belongs to the resistance-nodulation-cell division (RND) (TC 2.A.6) family. MdtC subfamily. Part of a tripartite efflux system composed of MdtA, MdtB and MdtC. MdtC forms a heteromultimer with MdtB.

The protein resides in the cell inner membrane. The chain is Multidrug resistance protein MdtC from Yersinia pseudotuberculosis serotype IB (strain PB1/+).